A 242-amino-acid polypeptide reads, in one-letter code: Fibrinolytic enzyme, isozyme C (242 aa).

The region spanning 1-242 (VIGGTNASPG…YLGWIGDNSR (242 aa)) is the Peptidase S1 domain. Cys29 and Cys45 are joined by a disulfide. Catalysis depends on charge relay system residues His44 and Asp93. Disulfide bonds link Cys127/Cys197, Cys158/Cys176, and Cys187/Cys219. The Charge relay system role is filled by Ser191.

The protein belongs to the peptidase S1 family.

The polypeptide is Fibrinolytic enzyme, isozyme C (Lumbricus rubellus (Humus earthworm)).